We begin with the raw amino-acid sequence, 320 residues long: Ubiquitin-like domain-containing CTD phosphatase 1 (320 aa).

A Ubiquitin-like domain is found at 6 to 77 (VVVIVKWSGK…LKPNFKLMMV (72 aa)). The FCP1 homology domain maps to 136–296 (PREGKKLLVL…LKLSDYLRKI (161 aa)). Mg(2+)-binding residues include Asp-146, Asp-148, and Asp-255.

Mg(2+) serves as cofactor.

The protein localises to the nucleus. The catalysed reaction is O-phospho-L-seryl-[protein] + H2O = L-seryl-[protein] + phosphate. It catalyses the reaction O-phospho-L-threonyl-[protein] + H2O = L-threonyl-[protein] + phosphate. Functionally, dephosphorylates 26S nuclear proteasomes, thereby decreasing their proteolytic activity. Recruited to the 19S regulatory particle of the 26S proteasome where it dephosphorylates 19S component Rpt1 which impairs Rpt1 ATPase activity and disrupts 26S proteasome assembly. This chain is Ubiquitin-like domain-containing CTD phosphatase 1, found in Drosophila melanogaster (Fruit fly).